Consider the following 348-residue polypeptide: 3',5'-cyclic-nucleotide phosphodiesterase (348 aa).

Mn(2+) is required as a cofactor.

The catalysed reaction is a nucleoside 3',5'-cyclic phosphate + H2O = a nucleoside 5'-phosphate + H(+). Functionally, hydrolyzes cAMP to 5'-AMP and cGMP to 5'-GMP. Does not show phosphohydrolase activity toward various phosphatidylcholine and phosphorylated sugars. In Helicobacter pylori (strain ATCC 700392 / 26695) (Campylobacter pylori), this protein is 3',5'-cyclic-nucleotide phosphodiesterase.